The following is a 131-amino-acid chain: uncharacterized protein (131 aa).

A run of 2 helical transmembrane segments spans residues 52–72 (LIMI…FYLV) and 97–117 (SDII…YDVG).

The protein resides in the membrane. This is an uncharacterized protein from Acanthamoeba polyphaga mimivirus (APMV).